Here is a 159-residue protein sequence, read N- to C-terminus: Transcriptional repressor NrdR (159 aa).

The segment at 3–34 (CPFCRHEDTQVVDSRVSEDGAAIRRRRRCSAC) is a zinc-finger region. Residues 49-139 (PAVVKKDGSR…VYRRFEDVSE (91 aa)) enclose the ATP-cone domain.

This sequence belongs to the NrdR family. Requires Zn(2+) as cofactor.

Negatively regulates transcription of bacterial ribonucleotide reductase nrd genes and operons by binding to NrdR-boxes. This Burkholderia ambifaria (strain MC40-6) protein is Transcriptional repressor NrdR.